We begin with the raw amino-acid sequence, 80 residues long: FXYD domain-containing ion transport regulator 7 (80 aa).

The Extracellular portion of the chain corresponds to 1–23 (MATPTQTPTKAPEEPDPFYYDYN). Threonine 3, threonine 5, and threonine 9 each carry an O-linked (GlcNAc) threonine glycan. A helical membrane pass occupies residues 24-46 (TVQTVGMTLATILFLLGILIVIS). Topologically, residues 47–80 (KKVKCRKADSRSESPTCKSCKSELPSSAPGGGGV) are cytoplasmic. Residues 54-80 (ADSRSESPTCKSCKSELPSSAPGGGGV) form a disordered region. Serine 73 bears the Phosphoserine mark.

The protein belongs to the FXYD family. Regulatory subunit of the sodium/potassium-transporting ATPase which is composed of a catalytic alpha subunit, a non-catalytic beta subunit and a FXYD regulatory unit that modulates the enzymatic activity in a tissue- and isoform-specific way by changing affinities of the Na+/K+-ATPase toward Na(+), K(+) or ATP. O-glycosylated; required for stabilization and translocation to the plasma membrane.

It localises to the cell membrane. In terms of biological role, associates with and regulates the activity of the sodium/potassium-transporting ATPase (NKA) which catalyzes the hydrolysis of ATP coupled with the exchange of Na(+) and K(+) ions across the plasma membrane. Reduces the apparent affinity for external K(+), an effect that depends on the presence of external Na(+) and voltage. Increases the apparent affinity for intracellular Na(+). The polypeptide is FXYD domain-containing ion transport regulator 7 (FXYD7) (Homo sapiens (Human)).